The sequence spans 269 residues: Probable 3-deoxy-manno-octulosonic acid transferase (269 aa).

It is found in the cytoplasm. It carries out the reaction an alpha-Kdo-(2-&gt;4)-alpha-Kdo-(2-&gt;6)-lipid IVA + CMP-3-deoxy-beta-D-manno-octulosonate = an alpha-Kdo-(2-&gt;4)-alpha-Kdo-(2-&gt;4)-alpha-Kdo-(2-&gt;6)-lipid IVA + CMP + H(+). The protein operates within bacterial outer membrane biogenesis; LPS core biosynthesis. Its function is as follows. Involved in the biosynthesis of the core oligosaccharide region of lipopolysaccharide (LPS). Required for the addition of 3-deoxy-D-manno-oct-2-ulosonic acid III (KdoIII) to the KdoII residue of the inner lipopolysaccharide core. The sequence is that of Probable 3-deoxy-manno-octulosonic acid transferase from Salmonella typhimurium (strain LT2 / SGSC1412 / ATCC 700720).